The primary structure comprises 428 residues: Adenylosuccinate synthetase (428 aa).

Residues 12–18 (GDEGKGK) and 40–42 (GHT) contribute to the GTP site. D13 acts as the Proton acceptor in catalysis. Mg(2+) is bound by residues D13 and G40. IMP is bound by residues 13–16 (DEGK), 38–41 (NAGH), T128, R142, Q223, T238, and R302. H41 (proton donor) is an active-site residue. Substrate is bound at residue 298–304 (TTTGRPR). GTP is bound by residues R304, 330 to 332 (KLD), and 412 to 414 (SVG).

The protein belongs to the adenylosuccinate synthetase family. As to quaternary structure, homodimer. Mg(2+) serves as cofactor.

It localises to the cytoplasm. It catalyses the reaction IMP + L-aspartate + GTP = N(6)-(1,2-dicarboxyethyl)-AMP + GDP + phosphate + 2 H(+). It participates in purine metabolism; AMP biosynthesis via de novo pathway; AMP from IMP: step 1/2. In terms of biological role, plays an important role in the de novo pathway of purine nucleotide biosynthesis. Catalyzes the first committed step in the biosynthesis of AMP from IMP. This Desulforamulus reducens (strain ATCC BAA-1160 / DSM 100696 / MI-1) (Desulfotomaculum reducens) protein is Adenylosuccinate synthetase.